Here is a 146-residue protein sequence, read N- to C-terminus: Large ribosomal subunit protein uL15 (146 aa).

Residues 1-58 form a disordered region; that stretch reads MRLHELHPAPGSRPRATRVGRGIGSGLGKTSGRGHKGQKARSGGGVRRGFEGGQMPLT. A compositionally biased stretch (gly residues) spans 21–31; that stretch reads RGIGSGLGKTS.

It belongs to the universal ribosomal protein uL15 family. Part of the 50S ribosomal subunit.

Binds to the 23S rRNA. This chain is Large ribosomal subunit protein uL15, found in Moorella thermoacetica (strain ATCC 39073 / JCM 9320).